A 250-amino-acid polypeptide reads, in one-letter code: MNFTVIIPARYASSRLPRKPLLDIAGKPMIQHVWEKAQQAGATRVIIATDHPEIEATAKAFGAEVCMTSDQHNSGTERLAEVIEKMQIADDEIIVNVQGDEPLIPPVIVSQVAENLDRCQVNMATLAVKLTTKEELFNPNAVKALADKNGMALYFSRAPIPFARDHFADCDDAFVASQNYLRHIGIYAYRAGFVKQYVAWQPTQLEQLESLEQLRALWYGEKIHIELAKQAPQVGVDTQEDLERVRRILA.

Belongs to the KdsB family.

Its subcellular location is the cytoplasm. The catalysed reaction is 3-deoxy-alpha-D-manno-oct-2-ulosonate + CTP = CMP-3-deoxy-beta-D-manno-octulosonate + diphosphate. It participates in nucleotide-sugar biosynthesis; CMP-3-deoxy-D-manno-octulosonate biosynthesis; CMP-3-deoxy-D-manno-octulosonate from 3-deoxy-D-manno-octulosonate and CTP: step 1/1. It functions in the pathway bacterial outer membrane biogenesis; lipopolysaccharide biosynthesis. Its function is as follows. Activates KDO (a required 8-carbon sugar) for incorporation into bacterial lipopolysaccharide in Gram-negative bacteria. This Actinobacillus pleuropneumoniae serotype 5b (strain L20) protein is 3-deoxy-manno-octulosonate cytidylyltransferase 1.